A 288-amino-acid chain; its full sequence is MELRDLQIFQSVADQGSVSSAAKELNYVQSNVTARIKQLENELKTPLFYRHKRGMTLTAEGRKMLVYVNKILQDVDELKQVFLDSETPSGILKIGTVETVSTLPTILSSYYKSYPNVDLSLQAGLTEELIREVLDHQLDGAFISGPIKHPLIEQYDVSTEKLMLVTQNKTFHIEEFTTTPLLVFNQGCGYRSKLERWLKDEGLLPKRIMEFNILETLLNSVALGLGITLVPQSAVHHLSKAGKVHCHAIPEKYGSISTVFIRRKDSYMTNSMRSFLKTIEEHHHINML.

The HTH lysR-type domain maps to 1-58; it reads MELRDLQIFQSVADQGSVSSAAKELNYVQSNVTARIKQLENELKTPLFYRHKRGMTLT. A DNA-binding region (H-T-H motif) is located at residues 18–37; sequence VSSAAKELNYVQSNVTARIK.

This sequence belongs to the LysR transcriptional regulatory family.

This is HTH-type transcriptional regulator CzcR (czcR) from Bacillus anthracis.